Consider the following 509-residue polypeptide: Proto-oncogene tyrosine-protein kinase LCK (509 aa).

Gly-2 is lipidated: N-myristoyl glycine. Positions Gly-2–Tyr-72 are interactions with CD4 and CD8. Residues Cys-3 and Cys-5 are each lipidated (S-palmitoyl cysteine). One can recognise an SH3 domain in the interval Leu-61–Ser-121. Lys-99 participates in a covalent cross-link: Glycyl lysine isopeptide (Lys-Gly) (interchain with G-Cter in ubiquitin). Ser-102 is modified (phosphoserine). Positions Trp-127–Cys-224 constitute an SH2 domain. The interaction with PTPRH stretch occupies residues Arg-154 to Arg-242. The residue at position 159 (Thr-159) is a Phosphothreonine. The residue at position 162 (Ser-162) is a Phosphoserine. Tyr-192 carries the phosphotyrosine modification. Ser-194 bears the Phosphoserine mark. Residues Leu-245–Phe-498 enclose the Protein kinase domain. Residues Leu-251–Val-259 and Lys-273 each bind ATP. A Glycyl lysine isopeptide (Lys-Gly) (interchain with G-Cter in ubiquitin) cross-link involves residue Lys-276. The active-site Proton acceptor is Asp-364. Tyr-394 is subject to Phosphotyrosine; by autocatalysis. Tyr-505 is subject to Phosphotyrosine; by CSK.

The protein belongs to the protein kinase superfamily. Tyr protein kinase family. As to quaternary structure, binds to the cytoplasmic domain of cell surface receptors, such as AXL, CD2, CD4, CD5, CD8, CD44, CD45 and CD122. Also binds to effector molecules, such as PI4K, VAV1, RASA1, FYB1 and to other protein kinases including CDK1, RAF1, ZAP70 and SYK. Binds to phosphatidylinositol 3'-kinase (PI3K) from T-lymphocytes through its SH3 domain and to the tyrosine phosphorylated form of KHDRBS1/p70 through its SH2 domain. Interacts with SQSTM1. Interacts with phosphorylated LIME1. Interacts with CBLB and PTPRH. Interacts with RUNX3. Forms a signaling complex with EPHA1, PTK2B and PI3-KINASE; upon activation by EFNA1 which may regulate T-lymphocytes migration. Associates with ZAP70 and RHOH; these interactions allow LCK-mediated RHOH and CD3 subunit phosphorylations in the presence of functional ZAP70. Interacts with Saimiriine herpesvirus 2 TIP. Interacts with UNC119; this interaction plays a crucial role in activation of LCK. Interacts with CEACAM1 (via cytoplasmic domain); mediates CEACAM1 phosphorylation resulting in PTPN6 recruitment that dephosphorylates TCR stimulation-induced CD247 and ZAP70. Interacts with CD160. Interacts with CD48. Autophosphorylated on Tyr-394, increasing enzymatic activity, this site is dephosphorylated by PTN22. Phosphorylated on Tyr-505 by CSK, decreasing activity. Dephosphorylated by PTPRC/CD45. Dephosphorylation at Tyr-394 by PTPN2 negatively regulates T-cells differentiation. Dephosphorylation at Tyr-394 by DUSP22 negatively regulates T-cell receptor signaling. In terms of processing, myristoylation is required prior to palmitoylation. Post-translationally, palmitoylation regulates association with the plasma membrane and could be mediated by ZDHHC2. 'Lys-63'-linked ubiquitinated at Lys-99 and Lys-276 by UBR2; this modification is required for autophosphorylation at Tyr-394. Expressed specifically in lymphoid cells.

Its subcellular location is the cell membrane. The protein resides in the cytoplasm. It is found in the cytosol. The enzyme catalyses L-tyrosyl-[protein] + ATP = O-phospho-L-tyrosyl-[protein] + ADP + H(+). With respect to regulation, the relative activities of the inhibitory tyrosine-protein kinase CSK and the activating tyrosine-protein phosphatase PTPRC/CD45 determine the level of LCK activity. These interactions allow rapid and efficient activation of LCK in response to TCR stimulation. Non-receptor tyrosine-protein kinase that plays an essential role in the selection and maturation of developing T-cells in the thymus and in the function of mature T-cells. Plays a key role in T-cell antigen receptor (TCR)-linked signal transduction pathways. Constitutively associated with the cytoplasmic portions of the CD4 and CD8 surface receptors. Association of the TCR with a peptide antigen-bound MHC complex facilitates the interaction of CD4 and CD8 with MHC class II and class I molecules, respectively, thereby recruiting the associated LCK protein to the vicinity of the TCR/CD3 complex. LCK then phosphorylates tyrosine residues within the immunoreceptor tyrosine-based activation motifs (ITAM) of the cytoplasmic tails of the TCR-gamma chains and CD3 subunits, initiating the TCR/CD3 signaling pathway. Once stimulated, the TCR recruits the tyrosine kinase ZAP70, that becomes phosphorylated and activated by LCK. Following this, a large number of signaling molecules are recruited, ultimately leading to lymphokine production. LCK also contributes to signaling by other receptor molecules. Associates directly with the cytoplasmic tail of CD2, which leads to hyperphosphorylation and activation of LCK. Also plays a role in the IL2 receptor-linked signaling pathway that controls the T-cell proliferative response. Binding of IL2 to its receptor results in increased activity of LCK. Is expressed at all stages of thymocyte development and is required for the regulation of maturation events that are governed by both pre-TCR and mature alpha beta TCR. Phosphorylates other substrates including RUNX3, PTK2B/PYK2, the microtubule-associated protein MAPT, RHOH or TYROBP. This is Proto-oncogene tyrosine-protein kinase LCK (LCK) from Saimiri sciureus (Common squirrel monkey).